Consider the following 425-residue polypeptide: Kynurenine/alpha-aminoadipate aminotransferase, mitochondrial (425 aa).

Residues 1-29 (MNYARFITATSAARKPSTIRVMTEILSKA) constitute a mitochondrion transit peptide. R20 contacts substrate. N6-acetyllysine is present on K69. Substrate contacts are provided by Y74 and Y142. The interval 178–208 (WKPEDSKNPKKNSPKFLYTVPNGNNPSGNSL) is disordered. N6-acetyllysine is present on K179. Polar residues predominate over residues 198–208 (PNGNNPSGNSL). Substrate is bound at residue N202. K263 bears the N6-(pyridoxal phosphate)lysine; alternate mark. Residues K263 and K339 each carry the N6-acetyllysine; alternate modification. An N6-succinyllysine; alternate mark is found at K263 and K339. R399 provides a ligand contact to substrate. N6-acetyllysine is present on K422.

This sequence belongs to the class-I pyridoxal-phosphate-dependent aminotransferase family. In terms of assembly, homodimer. The cofactor is pyridoxal 5'-phosphate.

The protein localises to the mitochondrion. The enzyme catalyses L-kynurenine + 2-oxoglutarate = kynurenate + L-glutamate + H2O. It catalyses the reaction L-2-aminoadipate + 2-oxoglutarate = 2-oxoadipate + L-glutamate. It carries out the reaction glycine + 2-oxoglutarate = glyoxylate + L-glutamate. The catalysed reaction is L-kynurenine + glyoxylate = kynurenate + glycine + H2O. The enzyme catalyses 3-hydroxy-L-kynurenine + glyoxylate = xanthurenate + glycine + H2O. It catalyses the reaction 2-oxohexanoate + L-kynurenine = L-2-aminohexanoate + kynurenate + H2O. It carries out the reaction 3-phenylpyruvate + L-kynurenine = kynurenate + L-phenylalanine + H2O. The catalysed reaction is 4-methylsulfanyl-2-oxobutanoate + L-kynurenine = kynurenate + L-methionine + H2O. The enzyme catalyses 2-oxo-3-sulfanylpropanoate + L-kynurenine = kynurenate + L-cysteine + H2O. It catalyses the reaction indole-3-pyruvate + L-kynurenine = kynurenate + L-tryptophan + H2O. It carries out the reaction 2-oxopentanoate + L-kynurenine = L-2-aminopentanoate + kynurenate + H2O. The catalysed reaction is 4-methyl-2-oxopentanoate + L-kynurenine = kynurenate + L-leucine + H2O. The enzyme catalyses glyoxylate + L-methionine = 4-methylsulfanyl-2-oxobutanoate + glycine. It catalyses the reaction L-2-aminoadipate + glyoxylate = 2-oxoadipate + glycine. It carries out the reaction L-tyrosine + glyoxylate = 3-(4-hydroxyphenyl)pyruvate + glycine. The catalysed reaction is glyoxylate + L-phenylalanine = 3-phenylpyruvate + glycine. The enzyme catalyses L-tryptophan + glyoxylate = indole-3-pyruvate + glycine. It catalyses the reaction L-leucine + glyoxylate = 4-methyl-2-oxopentanoate + glycine. It carries out the reaction 2-oxobutanoate + L-kynurenine = (2S)-2-aminobutanoate + kynurenate + H2O. The catalysed reaction is 2-oxoadipate + L-kynurenine = L-2-aminoadipate + kynurenate + H2O. It participates in amino-acid degradation; L-lysine degradation via saccharopine pathway; glutaryl-CoA from L-lysine: step 4/6. Its function is as follows. Transaminase with broad substrate specificity. Has transaminase activity towards aminoadipate, kynurenine, methionine and glutamate. Shows activity also towards tryptophan, aspartate and hydroxykynurenine. Accepts a variety of oxo-acids as amino-group acceptors, with a preference for 2-oxoglutarate, 2-oxocaproic acid, phenylpyruvate and alpha-oxo-gamma-methiol butyric acid. Can also use glyoxylate as amino-group acceptor (in vitro). The sequence is that of Kynurenine/alpha-aminoadipate aminotransferase, mitochondrial from Bos taurus (Bovine).